The primary structure comprises 267 residues: Neuferricin (267 aa).

Positions 1-17 are cleaved as a signal peptide; it reads MLKYLVALISMVLAVWT. One can recognise a Cytochrome b5 heme-binding domain in the interval 53–150; sequence LLTKEQLSLY…RDYTPVGKLI (98 aa).

This sequence belongs to the cytochrome b5 family. MAPR subfamily.

The protein resides in the secreted. Its function is as follows. Heme-binding protein which promotes neuronal but not astrocyte differentiation. In Danio rerio (Zebrafish), this protein is Neuferricin (cyb5d2).